A 66-amino-acid chain; its full sequence is MKFSALLPVFFLLLAVIDYCQAFAFLAAIPSILSALGKRDVKTQKYVDIKRRDLDLDDMLSKLFED.

The first 22 residues, 1–22, serve as a signal peptide directing secretion; the sequence is MKFSALLPVFFLLLAVIDYCQA. The residue at position 36 (Leu36) is a Leucine amide. The propeptide occupies 37-66; the sequence is GKRDVKTQKYVDIKRRDLDLDDMLSKLFED.

The protein belongs to the non-disulfide-bridged peptide (NDBP) superfamily. Short antimicrobial peptide (group 4) family. In terms of tissue distribution, expressed by the venom gland.

It is found in the secreted. Functionally, probable antimicrobial peptide. Has no inhibitory activity against herpes simplex virus type 1 (HSV-1). The sequence is that of Antimicrobial peptide Eval967 from Euscorpiops validus (Scorpion).